A 1463-amino-acid polypeptide reads, in one-letter code: Nitric oxide synthase 1 (1463 aa).

The segment at 1–200 is interaction with NOSIP; it reads MESHMFSVQQ…LQGSGENNKL (200 aa). The 83-residue stretch at 17–99 folds into the PDZ domain; that stretch reads SVRLFKRKVG…ETHVVLILRG (83 aa). 3 disordered regions span residues 110–194, 215–250, and 268–298; these read TFTG…LQGS, GKAI…LPLG, and VVLN…SKCP. The tract at residues 158–240 is DYNLL1/PIN/nNOS-inhibiting protein-binding; it reads PDPGQEASSL…VEVQVDRDPD (83 aa). Positions 226 to 243 are enriched in basic and acidic residues; sequence TETKDVEVQVDRDPDSKS. Residues 280–294 are compositionally biased toward polar residues; the sequence is PSASGKQSPTKNGSP. Serine 334 contributes to the (6R)-L-erythro-5,6,7,8-tetrahydrobiopterin binding site. A heme b-binding site is contributed by cysteine 415. Residues glutamine 478, tryptophan 587, tyrosine 588, and glutamate 592 each coordinate L-arginine. The (6R)-L-erythro-5,6,7,8-tetrahydrobiopterin site is built by valine 677, tryptophan 678, and phenylalanine 691. A heme b-binding site is contributed by tyrosine 706. Positions 725–745 are calmodulin-binding; the sequence is KRRAIGFKKLAEAVKFSAKLM. In terms of domain architecture, Flavodoxin-like spans 755-969; the sequence is ATILYATETG…AFRTWAKKVF (215 aa). Residues threonine 761, glutamate 762, threonine 763, lysine 765, serine 766, serine 807, threonine 808, and glycine 812 each coordinate FMN. Residues serine 881, serine 891, and serine 892 each carry the phosphoserine modification. Residues serine 920, histidine 925, cysteine 927, glutamate 953, and glutamine 957 each coordinate FMN. Residues 1024–1271 form the FAD-binding FR-type domain; sequence KRVSAARLLS…VRGAPSFHLP (248 aa). Arginine 1044 is a binding site for NADP(+). 7 residues coordinate FAD: histidine 1066, arginine 1207, tyrosine 1208, tyrosine 1209, serine 1210, threonine 1225, and alanine 1227. Serine 1230 serves as a coordination point for NADP(+). FAD contacts are provided by tyrosine 1231, valine 1244, cysteine 1245, and serine 1246. NADP(+) contacts are provided by threonine 1285, arginine 1318, serine 1347, arginine 1348, lysine 1354, tyrosine 1356, glutamine 1358, aspartate 1391, threonine 1432, and arginine 1434.

The protein belongs to the NOS family. Homodimer. Interacts with DLG4; the interaction possibly being prevented by the association between NOS1 and CAPON. Forms a ternary complex with CAPON and RASD1. Forms a ternary complex with CAPON and SYN1. Interacts with ZDHHC23. Interacts with NOSIP; which may impair its synaptic location. Interacts with HTR4. Interacts with SLC6A4. Interacts with VAC14. Interacts (via N-terminal domain) with DLG4 (via N-terminal tandem pair of PDZ domains). Interacts with SLC6A4. Forms a complex with ASL, ASS1 and SLC7A1; the complex regulates cell-autonomous L-arginine synthesis and citrulline recycling while channeling extracellular L-arginine to nitric oxide synthesis pathway. Interacts with DMD; localizes NOS1 to sarcolemma in muscle cells. Interacts with DYNLL1; inhibits the nitric oxide synthase activity. Heme b serves as cofactor. The cofactor is FAD. Requires FMN as cofactor. It depends on (6R)-L-erythro-5,6,7,8-tetrahydrobiopterin as a cofactor. In terms of processing, ubiquitinated; mediated by STUB1/CHIP in the presence of Hsp70 and Hsp40 (in vitro).

It is found in the cell membrane. Its subcellular location is the sarcolemma. The protein resides in the cell projection. It localises to the dendritic spine. The enzyme catalyses 2 L-arginine + 3 NADPH + 4 O2 + H(+) = 2 L-citrulline + 2 nitric oxide + 3 NADP(+) + 4 H2O. Stimulated by calcium/calmodulin. Inhibited by DYNLL1 that prevents the dimerization of the protein. Inhibited by NOSIP. In terms of biological role, produces nitric oxide (NO) which is a messenger molecule with diverse functions throughout the body. In the brain and peripheral nervous system, NO displays many properties of a neurotransmitter. Probably has nitrosylase activity and mediates cysteine S-nitrosylation of cytoplasmic target proteins such SRR. The chain is Nitric oxide synthase 1 (NOS1) from Ovis aries (Sheep).